The chain runs to 653 residues: tRNA-guanine(15) transglycosylase (653 aa).

Aspartate 91 acts as the Nucleophile in catalysis. Residues aspartate 126 and alanine 193 each contribute to the substrate site. Positions 276, 278, and 281 each coordinate Zn(2+). Residues 578-653 (AWRVAVNEES…QAVKTRKGGF (76 aa)) form the PUA domain.

Belongs to the archaeosine tRNA-ribosyltransferase family. The cofactor is Zn(2+).

It catalyses the reaction guanosine(15) in tRNA + 7-cyano-7-deazaguanine = 7-cyano-7-carbaguanosine(15) in tRNA + guanine. It functions in the pathway tRNA modification; archaeosine-tRNA biosynthesis. Exchanges the guanine residue with 7-cyano-7-deazaguanine (preQ0) at position 15 in the dihydrouridine loop (D-loop) of archaeal tRNAs. This chain is tRNA-guanine(15) transglycosylase, found in Methanothermobacter thermautotrophicus (strain ATCC 29096 / DSM 1053 / JCM 10044 / NBRC 100330 / Delta H) (Methanobacterium thermoautotrophicum).